A 446-amino-acid chain; its full sequence is Signal recognition particle 54 kDa protein (446 aa).

GTP contacts are provided by residues glycine 103 to threonine 110, aspartate 185 to arginine 189, and threonine 245 to aspartate 248.

It belongs to the GTP-binding SRP family. SRP54 subfamily. Part of the signal recognition particle protein translocation system, which is composed of SRP and FtsY. Archaeal SRP consists of a 7S RNA molecule of 300 nucleotides and two protein subunits: SRP54 and SRP19.

It localises to the cytoplasm. It catalyses the reaction GTP + H2O = GDP + phosphate + H(+). Its function is as follows. Involved in targeting and insertion of nascent membrane proteins into the cytoplasmic membrane. Binds to the hydrophobic signal sequence of the ribosome-nascent chain (RNC) as it emerges from the ribosomes. The SRP-RNC complex is then targeted to the cytoplasmic membrane where it interacts with the SRP receptor FtsY. This chain is Signal recognition particle 54 kDa protein, found in Metallosphaera sedula (strain ATCC 51363 / DSM 5348 / JCM 9185 / NBRC 15509 / TH2).